Here is a 75-residue protein sequence, read N- to C-terminus: Large ribosomal subunit protein bL28 (75 aa).

Residues 1–21 (MARVCQVTGKRPMSGNKRSHA) form a disordered region.

It belongs to the bacterial ribosomal protein bL28 family.

This Blochmanniella pennsylvanica (strain BPEN) protein is Large ribosomal subunit protein bL28.